A 266-amino-acid chain; its full sequence is Undecaprenyl-diphosphatase (266 aa).

Transmembrane regions (helical) follow at residues 41-61, 82-102, 106-126, 140-160, 180-200, 213-233, and 245-265; these read NLAF…VILW, YVIN…FFKD, AIFG…AALL, ISMK…LPGL, LAQF…LLDG, IPTL…CLAC, and LIYF…VSQL.

Belongs to the UppP family.

It is found in the cell inner membrane. The catalysed reaction is di-trans,octa-cis-undecaprenyl diphosphate + H2O = di-trans,octa-cis-undecaprenyl phosphate + phosphate + H(+). Its function is as follows. Catalyzes the dephosphorylation of undecaprenyl diphosphate (UPP). Confers resistance to bacitracin. This chain is Undecaprenyl-diphosphatase, found in Bacteroides fragilis (strain ATCC 25285 / DSM 2151 / CCUG 4856 / JCM 11019 / LMG 10263 / NCTC 9343 / Onslow / VPI 2553 / EN-2).